We begin with the raw amino-acid sequence, 326 residues long: Ribose operon repressor (326 aa).

The HTH lacI-type domain maps to 1-56; the sequence is MATIKDVAGAAGVSVATVSRNLNDNGYVHEETRTRVIAAMAKLNYYPNEVARSLYK. The segment at residues 4–23 is a DNA-binding region (H-T-H motif); it reads IKDVAGAAGVSVATVSRNLN.

Functionally, transcriptional repressor for the ribose rbsDACBK operon. This chain is Ribose operon repressor (rbsR), found in Bacillus subtilis (strain 168).